Consider the following 211-residue polypeptide: Arginine exporter protein ArgO (211 aa).

6 helical membrane passes run 1–21, 37–57, 68–88, 111–131, 147–167, and 179–199; these read MISY…PLGP, LMIA…GIFG, LLAL…FGAL, IIAT…DTFV, WFAL…ALLA, and AQRI…FQLA.

Belongs to the LysE/ArgO transporter (TC 2.A.75) family.

Its subcellular location is the cell inner membrane. It carries out the reaction L-arginine(in) = L-arginine(out). Functionally, involved in the export of arginine. Important to control the intracellular level of arginine and the correct balance between arginine and lysine. This Salmonella typhimurium (strain LT2 / SGSC1412 / ATCC 700720) protein is Arginine exporter protein ArgO.